Reading from the N-terminus, the 284-residue chain is 4-diphosphocytidyl-2-C-methyl-D-erythritol kinase (284 aa).

K14 is a catalytic residue. 98-108 lines the ATP pocket; it reads PMGGGLGGGSS. Residue D140 is part of the active site.

The protein belongs to the GHMP kinase family. IspE subfamily.

It carries out the reaction 4-CDP-2-C-methyl-D-erythritol + ATP = 4-CDP-2-C-methyl-D-erythritol 2-phosphate + ADP + H(+). Its pathway is isoprenoid biosynthesis; isopentenyl diphosphate biosynthesis via DXP pathway; isopentenyl diphosphate from 1-deoxy-D-xylulose 5-phosphate: step 3/6. Catalyzes the phosphorylation of the position 2 hydroxy group of 4-diphosphocytidyl-2C-methyl-D-erythritol. This Shewanella piezotolerans (strain WP3 / JCM 13877) protein is 4-diphosphocytidyl-2-C-methyl-D-erythritol kinase.